Here is a 240-residue protein sequence, read N- to C-terminus: PF03932 family protein CutC (240 aa).

Belongs to the CutC family.

It localises to the cytoplasm. This Xanthomonas campestris pv. campestris (strain 8004) protein is PF03932 family protein CutC.